We begin with the raw amino-acid sequence, 244 residues long: Proteasome subunit alpha type-5 (244 aa).

It belongs to the peptidase T1A family. In terms of assembly, the 26S proteasome consists of a 20S proteasome core and two 19S regulatory subunits. The 20S proteasome core is composed of 28 subunits that are arranged in four stacked rings, resulting in a barrel-shaped structure. The two end rings are each formed by seven alpha subunits, and the two central rings are each formed by seven beta subunits. The catalytic chamber with the active sites is on the inside of the barrel.

It is found in the cytoplasm. The protein resides in the nucleus. In terms of biological role, the proteasome is a multicatalytic proteinase complex which is characterized by its ability to cleave peptides with Arg, Phe, Tyr, Leu, and Glu adjacent to the leaving group at neutral or slightly basic pH. The proteasome has an ATP-dependent proteolytic activity. The polypeptide is Proteasome subunit alpha type-5 (Prosalpha5) (Drosophila melanogaster (Fruit fly)).